We begin with the raw amino-acid sequence, 191 residues long: MLKNALAALVLGSALIGGQAMAADYAIDKQGQHAFVNFKISHLGYSWLYGTFKDFDGKFSFDAANPEASKVSVTLNTASVDTNHAERDKHIRSADFLNVSKHGTATFESTSVKSTGEGTADITGDLTLNGVTKPVVIAAKFIGEGKDPWGGYRAGFEGTTTLKLKDFDITKDLGPASETVELILSIEGIRQ.

An N-terminal signal peptide occupies residues 1-22 (MLKNALAALVLGSALIGGQAMA).

It belongs to the UPF0312 family. Type 1 subfamily.

The protein resides in the periplasm. The chain is UPF0312 protein Pmen_0419 from Ectopseudomonas mendocina (strain ymp) (Pseudomonas mendocina).